Here is a 96-residue protein sequence, read N- to C-terminus: C-C motif chemokine 1 (96 aa).

An N-terminal signal peptide occupies residues 1–23 (MQIITTALVCLLLAGMWPEDVDS). 3 cysteine pairs are disulfide-bonded: Cys33–Cys57, Cys34–Cys73, and Cys49–Cys91. An N-linked (GlcNAc...) asparagine glycan is attached at Asn52.

It belongs to the intercrine beta (chemokine CC) family. In terms of assembly, monomer.

Its subcellular location is the secreted. Functionally, cytokine that is chemotactic for monocytes but not for neutrophils. Binds to CCR8. The chain is C-C motif chemokine 1 (CCL1) from Homo sapiens (Human).